The following is a 430-amino-acid chain: MKTTIKQAKDHLNQDVTIGAWLTNKRSSGKIAFLQLRDGTGFMQGVVVKSEVDEEVFKLAKEITQESSLYVTGTITEDNRSDLGYEMQVKSIEVISEAHDYPITPKNHGTEFLMDHRHLWLRSKKQHAVMKIRNEVIRATYEFFNKDGFTKVDPPILTASAPEGTSELFHTKYFDQDAFLSQSGQLYLEAAAMAHGKVFSFGPTFRAEKSKTRRHLIEFWMIEGEMAFTNHAESLEIQEQYVTHVVKSVLENCKLELKILERDTSKLEKVATPFPRISYDDAIEFLKSEGFDDIEWGEDFGAPHETAIANHYDLPVFITNYPTKIKPFYMQPNPENEETVLCADLIAPEGYGEIIGGSERVDDLELLEQRVKEHGLDEEAYSYYLDLRRYGSVPHCGFGLGLERTVAWISGVEHVRETAPFPRLLNRLYP.

The protein belongs to the class-II aminoacyl-tRNA synthetase family. As to quaternary structure, homodimer.

It is found in the cytoplasm. It catalyses the reaction tRNA(Asn) + L-asparagine + ATP = L-asparaginyl-tRNA(Asn) + AMP + diphosphate + H(+). This is Asparagine--tRNA ligase from Staphylococcus aureus (strain MW2).